Consider the following 264-residue polypeptide: Ion-translocating oxidoreductase complex subunit B (264 aa).

A helical membrane pass occupies residues 5 to 25 (LINSIAVLAGLGFAVGVMLVI). In terms of domain architecture, 4Fe-4S spans 33-92 (DSNPLIDDVASLLPGANCGGCGFAGCAACAEAIVEQGAPVNSCPVGGFEVAKQIGALLGQ). 20 residues coordinate [4Fe-4S] cluster: C50, C53, C58, C75, C138, C142, C148, C152, C172, C175, C178, C182, C217, C220, C223, C227, C246, C249, C252, and C256. 4Fe-4S ferredoxin-type domains follow at residues 127–162 (VALM…MGED), 163–192 (GFPV…FARD), 207–236 (KDVK…RVTE), and 237–264 (FLAE…IELR).

This sequence belongs to the 4Fe4S bacterial-type ferredoxin family. RnfB subfamily. In terms of assembly, the Rnf complex is probably composed of eight subunits, including RnfA, RnfB, RnfC, RnfD, RnfE and RnfG. Requires [4Fe-4S] cluster as cofactor.

It is found in the cell membrane. Part of a membrane-bound complex that couples electron transfer with translocation of ions across the membrane. Catalyzes Na(+) transport, most probably coupled to electron transfer from reduced ferredoxin to methanophenazine and heterodisulfide reductase. Involved in heterodisulfide reduction during methanogenesis from acetate. In Methanosarcina acetivorans (strain ATCC 35395 / DSM 2834 / JCM 12185 / C2A), this protein is Ion-translocating oxidoreductase complex subunit B.